A 184-amino-acid chain; its full sequence is Ribosome-recycling factor (184 aa).

The protein belongs to the RRF family.

It localises to the cytoplasm. Functionally, responsible for the release of ribosomes from messenger RNA at the termination of protein biosynthesis. May increase the efficiency of translation by recycling ribosomes from one round of translation to another. The chain is Ribosome-recycling factor from Bifidobacterium adolescentis (strain ATCC 15703 / DSM 20083 / NCTC 11814 / E194a).